Here is a 168-residue protein sequence, read N- to C-terminus: G/U mismatch-specific DNA glycosylase (168 aa).

Belongs to the uracil-DNA glycosylase (UDG) superfamily. TDG/mug family. Binds DNA as a monomer.

It is found in the cytoplasm. It carries out the reaction Specifically hydrolyzes mismatched double-stranded DNA and polynucleotides, releasing free uracil.. In terms of biological role, excises ethenocytosine and uracil, which can arise by alkylation or deamination of cytosine, respectively, from the corresponding mispairs with guanine in ds-DNA. It is capable of hydrolyzing the carbon-nitrogen bond between the sugar-phosphate backbone of the DNA and the mispaired base. The complementary strand guanine functions in substrate recognition. Required for DNA damage lesion repair in stationary-phase cells. This chain is G/U mismatch-specific DNA glycosylase, found in Escherichia coli O9:H4 (strain HS).